The chain runs to 114 residues: Large ribosomal subunit protein bL19 (114 aa).

The protein belongs to the bacterial ribosomal protein bL19 family.

Its function is as follows. This protein is located at the 30S-50S ribosomal subunit interface and may play a role in the structure and function of the aminoacyl-tRNA binding site. The protein is Large ribosomal subunit protein bL19 of Clostridium botulinum (strain Loch Maree / Type A3).